Here is a 270-residue protein sequence, read N- to C-terminus: Putative carboxymethylenebutenolidase (270 aa).

Residues cysteine 147, aspartate 204, and histidine 236 contribute to the active site.

It belongs to the dienelactone hydrolase family.

It catalyses the reaction 2-(5-oxo-2,5-dihydrofuran-2-ylidene)acetate + H2O = 4-oxohex-2-enedioate + H(+). The chain is Putative carboxymethylenebutenolidase (ysgA) from Salmonella typhi.